The following is a 123-amino-acid chain: DNA-directed RNA polymerase subunit omega (123 aa).

The interval 72–100 (QRVLPSEDEEDAAREERGQQMEALPAPPV) is disordered.

Belongs to the RNA polymerase subunit omega family. As to quaternary structure, the RNAP catalytic core consists of 2 alpha, 1 beta, 1 beta' and 1 omega subunit. When a sigma factor is associated with the core the holoenzyme is formed, which can initiate transcription.

It carries out the reaction RNA(n) + a ribonucleoside 5'-triphosphate = RNA(n+1) + diphosphate. In terms of biological role, promotes RNA polymerase assembly. Latches the N- and C-terminal regions of the beta' subunit thereby facilitating its interaction with the beta and alpha subunits. This chain is DNA-directed RNA polymerase subunit omega, found in Maricaulis maris (strain MCS10) (Caulobacter maris).